We begin with the raw amino-acid sequence, 307 residues long: Ornithine carbamoyltransferase (307 aa).

Residues 50 to 53 (STRT), Gln77, Arg101, and 128 to 131 (HPCQ) contribute to the carbamoyl phosphate site. Residues Asn160, Asp224, and 228–229 (SM) contribute to the L-ornithine site. Carbamoyl phosphate contacts are provided by residues 264 to 265 (CL) and Arg292.

Belongs to the aspartate/ornithine carbamoyltransferase superfamily. OTCase family.

The protein localises to the cytoplasm. It catalyses the reaction carbamoyl phosphate + L-ornithine = L-citrulline + phosphate + H(+). It participates in amino-acid biosynthesis; L-arginine biosynthesis; L-arginine from L-ornithine and carbamoyl phosphate: step 1/3. Reversibly catalyzes the transfer of the carbamoyl group from carbamoyl phosphate (CP) to the N(epsilon) atom of ornithine (ORN) to produce L-citrulline. The chain is Ornithine carbamoyltransferase from Clavibacter sepedonicus (Clavibacter michiganensis subsp. sepedonicus).